A 344-amino-acid polypeptide reads, in one-letter code: uncharacterized protein (344 aa).

The stretch at 221–249 forms a coiled coil; that stretch reads IQAQSMDEQKQIQEIYQNVEKLKEDVTKN.

It belongs to the IIV-6 287R family.

This is an uncharacterized protein from Aedes vexans (Inland floodwater mosquito).